The primary structure comprises 379 residues: MSSTKLISLIVSITFFLTLQCSMAQTVVKASYWFPASEFPVTDIDSSLFTHLFCAFADLNSQTNQVTVSSANQPKFSTFTQTVQRRNPSVKTLLSIGGGIADKTAYASMASNPTSRKSFIDSSIRVARSYGFHGLDLDWEYPSSATEMTNFGTLLREWRSAVVAEASSSGKPRLLLAAAVFYSNNYYSVLYPVSAVASSLDWVNLMAYDFYGPGWSRVTGPPAALFDPSNAGPSGDAGTRSWIQAGLPAKKAVLGFPYYGYAWRLTNANSHSYYAPTTGAAISPDGSIGYGQIRKFIVDNGATTVYNSTVVGDYCYAGTNWIGYDDNQSIVTKVRYAKQRGLLGYFSWHVGADDNSGLSRAASQAWDATTATTRTIQKV.

An N-terminal signal peptide occupies residues 1 to 24 (MSSTKLISLIVSITFFLTLQCSMA). Residues 27 to 369 (VVKASYWFPA…RAASQAWDAT (343 aa)) enclose the GH18 domain. G99 contributes to the chitin binding site. The active-site Proton donor is the E140. Residue Y259 coordinates chitin. 2 N-linked (GlcNAc...) asparagine glycosylation sites follow: N307 and N327. W348 provides a ligand contact to chitin.

This sequence belongs to the glycosyl hydrolase 18 family. Chitinase class V subfamily.

The catalysed reaction is Random endo-hydrolysis of N-acetyl-beta-D-glucosaminide (1-&gt;4)-beta-linkages in chitin and chitodextrins.. It carries out the reaction Hydrolysis of N,N'-diacetylchitobiose from the non-reducing end of chitin and chitodextrins.. It participates in glycan degradation; chitin degradation. Functionally, can hydrolyze glycol chitin and chitin oligosaccharides (e.g. N-acetylglucosamine) (GlcNAc)4, (GlcNAc)5 and (GlcNAc)6. Hydrolyzes N-acetylglucosamine oligomers producing dimers from the non-reducing end of the substrates. The polypeptide is Class V chitinase (Arabidopsis thaliana (Mouse-ear cress)).